Consider the following 265-residue polypeptide: GTP cyclohydrolase FolE2 (265 aa).

The protein belongs to the GTP cyclohydrolase IV family.

It carries out the reaction GTP + H2O = 7,8-dihydroneopterin 3'-triphosphate + formate + H(+). It participates in cofactor biosynthesis; 7,8-dihydroneopterin triphosphate biosynthesis; 7,8-dihydroneopterin triphosphate from GTP: step 1/1. In terms of biological role, converts GTP to 7,8-dihydroneopterin triphosphate. This Bordetella petrii (strain ATCC BAA-461 / DSM 12804 / CCUG 43448) protein is GTP cyclohydrolase FolE2.